We begin with the raw amino-acid sequence, 468 residues long: Peroxisome proliferator-activated receptor alpha (468 aa).

Residues 99–173 (NIECRICGDK…VGMSHNAIRF (75 aa)) constitute a DNA-binding region (nuclear receptor). 2 consecutive NR C4-type zinc fingers follow at residues 102-122 (CRICGDKASGYHYGVHACEGC) and 139-161 (CDRSCKIQKKNRNKCQYCRFHKC). Residues 239–466 (FVIHDMETLC…HPLLQEIYRD (228 aa)) enclose the NR LBD domain. The segment at 304-433 (DQVTLLKYGV…PKLLQKMVDL (130 aa)) is required for heterodimerization with RXRA.

It belongs to the nuclear hormone receptor family. NR1 subfamily. As to quaternary structure, heterodimer; with RXRA. This heterodimerization is required for DNA binding and transactivation activity. Interacts with NCOA3 coactivator. Interacts with CITED2; the interaction stimulates its transcriptional activity. Also interacts with PPARBP in vitro. Interacts with AKAP13, LPIN1, PRDM16 and coactivator NCOA6. Interacts with ASXL1 and ASXL2. Interacts with PER2. Interacts with SIRT1; the interaction seems to be modulated by NAD(+) levels. Interacts with CRY1 and CRY2. In hepatocytes, interacts with PAQR3 and HUWE1; the interactions promote PPARA poylubiquitination and HUWE1-mediated degradation. Phosphorylated. Post-translationally, ubiquitinated by E3 ubiquitin-protein ligase HUWE1; leading to proteasomal degradation. As to expression, expressed predominantly in liver and kidney.

The protein resides in the nucleus. Functionally, ligand-activated transcription factor. Key regulator of lipid metabolism. Activated by the endogenous ligand 1-palmitoyl-2-oleoyl-sn-glycerol-3-phosphocholine (16:0/18:1-GPC). Activated by oleylethanolamide, a naturally occurring lipid that regulates satiety. Receptor for peroxisome proliferators such as hypolipidemic drugs and fatty acids. Regulates the peroxisomal beta-oxidation pathway of fatty acids. Functions as a transcription activator for the ACOX1 and P450 genes. Transactivation activity requires heterodimerization with RXRA and is antagonized by NR2C2. May be required for the propagation of clock information to metabolic pathways regulated by PER2. In Rattus norvegicus (Rat), this protein is Peroxisome proliferator-activated receptor alpha (Ppara).